The chain runs to 134 residues: Cell division protein SepF (134 aa).

The protein belongs to the SepF family. Homodimer. Interacts with FtsZ.

It localises to the cytoplasm. In terms of biological role, cell division protein that is part of the divisome complex and is recruited early to the Z-ring. Probably stimulates Z-ring formation, perhaps through the cross-linking of FtsZ protofilaments. Its function overlaps with FtsA. The polypeptide is Cell division protein SepF (Caldanaerobacter subterraneus subsp. tengcongensis (strain DSM 15242 / JCM 11007 / NBRC 100824 / MB4) (Thermoanaerobacter tengcongensis)).